The chain runs to 204 residues: MQRASRLKKELHMLAIEPPPGITCWQEKDQVADLRAQILGGANTPYEKGVFTLEVIIPERYPFEPPQVRFLTPIYHPNIDSSGRICLDILKLPPKGAWRPSLNIATVLTSIQLLMAEPNPDDPLMADISSEFKYNKIAFLKKAKQWTEAHARQKQKADEEELGTSSEVGDSEESHSTQKRKARPLGGMEKKFSPDVQRVYPGPS.

A UBC core domain is found at 2–152 (QRASRLKKEL…AKQWTEAHAR (151 aa)). Residue cysteine 86 is the Glycyl thioester intermediate of the active site. Residues lysine 91 and lysine 181 each participate in a glycyl lysine isopeptide (Lys-Gly) (interchain with G-Cter in ubiquitin) cross-link. The interval 150–204 (HARQKQKADEEELGTSSEVGDSEESHSTQKRKARPLGGMEKKFSPDVQRVYPGPS) is disordered. Residues lysine 190 and lysine 191 each participate in a glycyl lysine isopeptide (Lys-Gly) (interchain with G-Cter in SUMO2) cross-link. Serine 193 carries the post-translational modification Phosphoserine.

It belongs to the ubiquitin-conjugating enzyme family. In terms of assembly, interacts with FANCL and BRCA1. Auto-ubiquitinated. Effects of auto-monoubiquitination at Lys-91 and Lys-181 are unclear.

It is found in the nucleus. It carries out the reaction S-ubiquitinyl-[E1 ubiquitin-activating enzyme]-L-cysteine + [E2 ubiquitin-conjugating enzyme]-L-cysteine = [E1 ubiquitin-activating enzyme]-L-cysteine + S-ubiquitinyl-[E2 ubiquitin-conjugating enzyme]-L-cysteine.. It participates in protein modification; protein ubiquitination. Accepts ubiquitin from the E1 complex and catalyzes its covalent attachment to other proteins. Catalyzes monoubiquitination. Involved in mitomycin-C (MMC)-induced DNA repair: acts as a specific E2 ubiquitin-conjugating enzyme for the Fanconi anemia complex by associating with E3 ubiquitin-protein ligase FANCL and catalyzing monoubiquitination of FANCD2, a key step in the DNA damage pathway. Also mediates monoubiquitination of FANCL and FANCI. May contribute to ubiquitination and degradation of BRCA1. In vitro able to promote polyubiquitination using all 7 ubiquitin Lys residues, but may prefer 'Lys-11'-, 'Lys-27'-, 'Lys-48'- and 'Lys-63'-linked polyubiquitination. The protein is Ubiquitin-conjugating enzyme E2 T (Ube2t) of Mus musculus (Mouse).